A 308-amino-acid polypeptide reads, in one-letter code: Cytochrome c biogenesis protein CcsA (308 aa).

Transmembrane regions (helical) follow at residues 2–22 (IVST…SILI), 44–64 (GMLV…IYLG), 71–91 (LSES…IAYF), 143–163 (MILG…LMVI), 212–232 (VIGL…VWAN), 239–259 (WSWD…AIYL), and 273–293 (AIVA…VNLV).

This sequence belongs to the CcmF/CycK/Ccl1/NrfE/CcsA family. In terms of assembly, may interact with Ccs1.

The protein resides in the plastid membrane. Functionally, required during biogenesis of c-type cytochromes (cytochrome c6 and cytochrome f) at the step of heme attachment. The polypeptide is Cytochrome c biogenesis protein CcsA (Cuscuta exaltata (Tall dodder)).